The following is a 197-amino-acid chain: Suppressor of RNA silencing p3 (197 aa).

Belongs to the tenuiviruses p3 protein family. As to quaternary structure, homodimer.

The protein localises to the host cytoplasm. In terms of biological role, acts as a suppressor of RNA-mediated gene silencing, also known as post-transcriptional gene silencing (PTGS), presumably through the binding of dsRNA. The protein is Suppressor of RNA silencing p3 of Rottboellia (Sorghum).